We begin with the raw amino-acid sequence, 439 residues long: Xylose isomerase (439 aa).

Residues histidine 99 and aspartate 102 contribute to the active site. Mg(2+) contacts are provided by glutamate 230, glutamate 266, histidine 269, aspartate 294, aspartate 305, aspartate 307, and aspartate 337.

The protein belongs to the xylose isomerase family. In terms of assembly, homotetramer. The cofactor is Mg(2+).

It localises to the cytoplasm. The enzyme catalyses alpha-D-xylose = alpha-D-xylulofuranose. This chain is Xylose isomerase, found in Shouchella clausii (strain KSM-K16) (Alkalihalobacillus clausii).